The following is a 248-amino-acid chain: Small ribosomal subunit protein uS2 (248 aa).

This sequence belongs to the universal ribosomal protein uS2 family.

The polypeptide is Small ribosomal subunit protein uS2 (Herminiimonas arsenicoxydans).